A 338-amino-acid chain; its full sequence is Hydroxyproline O-galactosyltransferase HPGT1 (338 aa).

Residues 1-12 are Cytoplasmic-facing; sequence MARKGSSIRLSS. Residues 13–32 traverse the membrane as a helical; Signal-anchor for type II membrane protein segment; sequence SRISTLLLFMFATFASFYVA. Residues 33–338 lie on the Lumenal side of the membrane; that stretch reads GRLWQESQTR…WSSEAICAGV (306 aa).

This sequence belongs to the glycosyltransferase 31 family. Mn(2+) is required as a cofactor. Expressed in roots, rosette leaves, cauline leaves, stems, flowers and siliques.

The protein localises to the golgi apparatus membrane. The protein operates within protein modification; protein glycosylation. In terms of biological role, possesses hydroxyproline O-galactosyltransferase activity. Transfers galactose from UDP-galactose to hydroxyproline residues in the arabinogalactan proteins (AGPs). Is specific for AGPs containing non-contiguous peptidyl hydroxyproline residues. The addition of galactose onto the peptidyl hydroxyproline residues in AGP core proteins represents the first committed step in arabinogalactan polysaccharide addition. AGP glycans play essential roles in both vegetative and reproductive plant growth. This chain is Hydroxyproline O-galactosyltransferase HPGT1, found in Arabidopsis thaliana (Mouse-ear cress).